Reading from the N-terminus, the 29-residue chain is Tail virion protein G7P (29 aa).

The chain crosses the membrane as a helical span at residues 8–28; that stretch reads VVIALGLVISFGLGAITAGVL.

Belongs to the inovirus G7P protein family.

It is found in the virion. The protein localises to the host membrane. May initiate with G9P the virion concomitant assembly-budding process, by interacting with the packaging signal of the viral genome. The assembly-budding takes place at the host inner membrane. In turn, G7P and G9P are present at the end of the filamentous virion that emerges first from the bacterial host. This chain is Tail virion protein G7P (VII), found in Escherichia coli (Bacteriophage I2-2).